The chain runs to 337 residues: Zinc finger protein Gfi-1b (337 aa).

A mediates repression of transcription region spans residues 1–20 (MPRSFLVKSKKAHTYHQHRF). The tract at residues 1-20 (MPRSFLVKSKKAHTYHQHRF) is SNAG domain. 6 C2H2-type zinc fingers span residues 170–193 (YHCV…RRSH), 199–221 (FACE…TNIH), 227–249 (FECK…LLIH), 255–277 (YPCQ…TYIH), 283–305 (HKCQ…SRKH), and 311–334 (FSCE…ETQH).

Expressed in erythroid cells of primitive and definitive lineage and bone marrow cells.

The protein localises to the nucleus. In terms of biological role, essential transcriptional regulator necessary for development and differentiation of erythroid and megakaryocytic lineages. Alters histone methylation by recruiting histone methyltransferase to target genes promoters. Plays a role in heterochromatin formation. The sequence is that of Zinc finger protein Gfi-1b (GFI1B) from Gallus gallus (Chicken).